The sequence spans 233 residues: Octanoyltransferase (233 aa).

Residues 34-214 (GQAPSTVLLL…EFSAREATLI (181 aa)) form the BPL/LPL catalytic domain. Residues 72–79 (RGGKLTWH), 144–146 (AIG), and 157–159 (GFS) each bind substrate. Catalysis depends on Cys175, which acts as the Acyl-thioester intermediate.

Belongs to the LipB family.

Its subcellular location is the cytoplasm. The enzyme catalyses octanoyl-[ACP] + L-lysyl-[protein] = N(6)-octanoyl-L-lysyl-[protein] + holo-[ACP] + H(+). It functions in the pathway protein modification; protein lipoylation via endogenous pathway; protein N(6)-(lipoyl)lysine from octanoyl-[acyl-carrier-protein]: step 1/2. In terms of biological role, catalyzes the transfer of endogenously produced octanoic acid from octanoyl-acyl-carrier-protein onto the lipoyl domains of lipoate-dependent enzymes. Lipoyl-ACP can also act as a substrate although octanoyl-ACP is likely to be the physiological substrate. This is Octanoyltransferase from Renibacterium salmoninarum (strain ATCC 33209 / DSM 20767 / JCM 11484 / NBRC 15589 / NCIMB 2235).